A 569-amino-acid polypeptide reads, in one-letter code: Urease subunit alpha (569 aa).

The Urease domain maps to 131-569 (GGFDSHIHFI…LPMAQRYFLF (439 aa)). Residues histidine 136, histidine 138, and lysine 219 each coordinate Ni(2+). Lysine 219 is subject to N6-carboxylysine. Position 221 (histidine 221) interacts with substrate. Ni(2+)-binding residues include histidine 248 and histidine 274. The Proton donor role is filled by histidine 322. Position 362 (aspartate 362) interacts with Ni(2+).

The protein belongs to the metallo-dependent hydrolases superfamily. Urease alpha subunit family. As to quaternary structure, heterotrimer of UreA (gamma), UreB (beta) and UreC (alpha) subunits. Three heterotrimers associate to form the active enzyme. The cofactor is Ni cation. Carboxylation allows a single lysine to coordinate two nickel ions.

It localises to the cytoplasm. The catalysed reaction is urea + 2 H2O + H(+) = hydrogencarbonate + 2 NH4(+). The protein operates within nitrogen metabolism; urea degradation; CO(2) and NH(3) from urea (urease route): step 1/1. This is Urease subunit alpha from Roseobacter denitrificans (strain ATCC 33942 / OCh 114) (Erythrobacter sp. (strain OCh 114)).